The primary structure comprises 324 residues: S-methyl-5'-thioadenosine phosphorylase (324 aa).

Residues Ser-14, 57–58 (RH), and 90–91 (SA) each bind phosphate. Position 196 (Met-196) interacts with substrate. Position 197 (Ser-197) interacts with phosphate. Residue 220–222 (DYD) participates in substrate binding.

This sequence belongs to the PNP/MTAP phosphorylase family. MTAP subfamily. Homotrimer.

The protein resides in the cytoplasm. Its subcellular location is the nucleus. The enzyme catalyses S-methyl-5'-thioadenosine + phosphate = 5-(methylsulfanyl)-alpha-D-ribose 1-phosphate + adenine. Its pathway is amino-acid biosynthesis; L-methionine biosynthesis via salvage pathway; S-methyl-5-thio-alpha-D-ribose 1-phosphate from S-methyl-5'-thioadenosine (phosphorylase route): step 1/1. Its function is as follows. Catalyzes the reversible phosphorylation of S-methyl-5'-thioadenosine (MTA) to adenine and 5-methylthioribose-1-phosphate. Involved in the breakdown of MTA, a major by-product of polyamine biosynthesis. Responsible for the first step in the methionine salvage pathway after MTA has been generated from S-adenosylmethionine. Has broad substrate specificity with 6-aminopurine nucleosides as preferred substrates. This chain is S-methyl-5'-thioadenosine phosphorylase, found in Coprinopsis cinerea (strain Okayama-7 / 130 / ATCC MYA-4618 / FGSC 9003) (Inky cap fungus).